The sequence spans 329 residues: Endonuclease 8-like 2 (329 aa).

Pro-2 serves as the catalytic Schiff-base intermediate with DNA. Glu-3 serves as the catalytic Proton donor. The active-site Proton donor; for beta-elimination activity is Lys-50. Lys-50 carries the N6-acetyllysine modification. Ser-68 bears the Phosphoserine mark. Residues 68–116 are disordered; sequence SLLSEPLREGEQKDKARHHQEASDPSSWSPGGDSAVPSGDDGLQCLGGD. Over residues 73–89 the composition is skewed to basic and acidic residues; it reads PLREGEQKDKARHHQEA. Residues 90–102 are compositionally biased toward low complexity; the sequence is SDPSSWSPGGDSA. An N6-acetyllysine modification is found at Lys-149. Residue Asn-227 coordinates DNA. Residues 280–316 form an FPG-type zinc finger; that stretch reads QIYQKEQCPAGHQVVRESLGPPGGFQRLTWWCPQCQP. The active-site Proton donor; for delta-elimination activity is the Arg-306.

Belongs to the FPG family. In terms of assembly, binds EP300.

It localises to the nucleus. The catalysed reaction is 2'-deoxyribonucleotide-(2'-deoxyribose 5'-phosphate)-2'-deoxyribonucleotide-DNA = a 3'-end 2'-deoxyribonucleotide-(2,3-dehydro-2,3-deoxyribose 5'-phosphate)-DNA + a 5'-end 5'-phospho-2'-deoxyribonucleoside-DNA + H(+). With respect to regulation, acetylation of Lys-50 leads to loss of DNA nicking activity. Involved in base excision repair of DNA damaged by oxidation or by mutagenic agents. Has DNA glycosylase activity towards 5-hydroxyuracil and other oxidized derivatives of cytosine with a preference for mismatched double-stranded DNA (DNA bubbles). Has low or no DNA glycosylase activity towards thymine glycol, 2-hydroxyadenine, hypoxanthine and 8-oxoguanine. Has AP (apurinic/apyrimidinic) lyase activity and introduces nicks in the DNA strand. Cleaves the DNA backbone by beta-delta elimination to generate a single-strand break at the site of the removed base with both 3'- and 5'-phosphates. This chain is Endonuclease 8-like 2 (NEIL2), found in Bos taurus (Bovine).